We begin with the raw amino-acid sequence, 349 residues long: Glycerol-3-phosphate dehydrogenase [NAD(+)], cytoplasmic (349 aa).

Residues 10-15, K120, and A153 each bind NAD(+); that span reads GSGDWG. K120 lines the substrate pocket. Position 154 is a phosphoserine (S154). K204 acts as the Proton acceptor in catalysis. R269 provides a ligand contact to NAD(+). Position 269 to 270 (269 to 270) interacts with substrate; sequence RN. An N6-succinyllysine modification is found at K289. NAD(+)-binding residues include K296 and Q298. The residue at position 326 (Y326) is a Phosphotyrosine.

This sequence belongs to the NAD-dependent glycerol-3-phosphate dehydrogenase family. In terms of assembly, homodimer.

Its subcellular location is the cytoplasm. It catalyses the reaction sn-glycerol 3-phosphate + NAD(+) = dihydroxyacetone phosphate + NADH + H(+). Has glycerol-3-phosphate dehydrogenase activity. In Oryctolagus cuniculus (Rabbit), this protein is Glycerol-3-phosphate dehydrogenase [NAD(+)], cytoplasmic (GPD1).